Reading from the N-terminus, the 442-residue chain is MENAKMNSLIAQYPLVKDLVALQETTWFNPGTTSLAEGLPYVGLTEQDVQDAHARLSRFAPYLAKAFPETAATGGIIESELVAIPAMQKRLEKEYHQPIAGQLLLKKDSHLPISGSIKARGGIYEVLAHAEKLALEAGLLTLEDDYSKLLSPEFKQFFSQYSIAVGSTGNLGLSIGIMSARIGFKVTVHMSADARAWKKAKLRSHGVTVVEYEQDYGVAVEEGRKAAQSDPNCFFIDDENSRTLFLGYSVAGQRLKAQFAQQGRIVNADNPLFVYLPCGVGGGPGGVAFGLKLAFGDHVHCFFAEPTHSPCMLLGVHTGLHDQISVQDIGIDNLTAADGLAVGRASGFVGRAMERLLDGFYTLSDQTMYDMLGWLAQEEGIRLEPSALAGMAGPQRVCASVSYQQLHGFSAEQLRNATHLVWATGGGMVPEEEMNQYLAKGR.

N6-(pyridoxal phosphate)lysine is present on Lys-118.

Belongs to the serine/threonine dehydratase family. DsdA subfamily. In terms of assembly, monomer. It depends on pyridoxal 5'-phosphate as a cofactor.

It carries out the reaction D-serine = pyruvate + NH4(+). This Escherichia coli O6:K15:H31 (strain 536 / UPEC) protein is D-serine dehydratase 1.